Here is a 734-residue protein sequence, read N- to C-terminus: Amino-acid acetyltransferase, mitochondrial (734 aa).

The disordered stretch occupies residues 384 to 433 (YSETSSRSTRAEADSNFNLRDDIPLSSFTEQKSGELEYSPRHQNDSPTQQ). Basic and acidic residues-rich tracts occupy residues 392-406 (TRAE…RDDI) and 415-427 (KSGE…RHQN). In terms of domain architecture, N-acetyltransferase spans 555-724 (GVPQISLTDP…YEAVCKTIEP (170 aa)).

The protein belongs to the acetyltransferase family.

It is found in the mitochondrion. The catalysed reaction is L-glutamate + acetyl-CoA = N-acetyl-L-glutamate + CoA + H(+). The protein operates within amino-acid biosynthesis; L-arginine biosynthesis; N(2)-acetyl-L-ornithine from L-glutamate: step 1/4. N-acetylglutamate synthase involved in arginine biosynthesis. The polypeptide is Amino-acid acetyltransferase, mitochondrial (arg2) (Botryotinia fuckeliana (strain B05.10) (Noble rot fungus)).